The sequence spans 132 residues: Large ribosomal subunit protein bL17 (132 aa).

The protein belongs to the bacterial ribosomal protein bL17 family. Part of the 50S ribosomal subunit. Contacts protein L32.

The sequence is that of Large ribosomal subunit protein bL17 from Albidiferax ferrireducens (strain ATCC BAA-621 / DSM 15236 / T118) (Rhodoferax ferrireducens).